A 402-amino-acid chain; its full sequence is Exodeoxyribonuclease 7 large subunit (402 aa).

This sequence belongs to the XseA family. As to quaternary structure, heterooligomer composed of large and small subunits.

It is found in the cytoplasm. It catalyses the reaction Exonucleolytic cleavage in either 5'- to 3'- or 3'- to 5'-direction to yield nucleoside 5'-phosphates.. Functionally, bidirectionally degrades single-stranded DNA into large acid-insoluble oligonucleotides, which are then degraded further into small acid-soluble oligonucleotides. The sequence is that of Exodeoxyribonuclease 7 large subunit from Streptomyces coelicolor (strain ATCC BAA-471 / A3(2) / M145).